The sequence spans 360 residues: Phospho-N-acetylmuramoyl-pentapeptide-transferase (360 aa).

10 helical membrane passes run 27–47, 73–93, 97–117, 132–152, 164–184, 199–219, 236–256, 263–283, 288–308, and 337–357; these read ILSV…MIRM, TMGG…WGDL, FVWI…VDDW, WKYL…FFTA, FFKS…YFVI, GLAI…AYAG, AGEL…FLWF, VFMG…MAVI, IVLF…MLQV, and KIIV…LATL.

The protein belongs to the glycosyltransferase 4 family. MraY subfamily. Mg(2+) is required as a cofactor.

The protein localises to the cell inner membrane. The catalysed reaction is UDP-N-acetyl-alpha-D-muramoyl-L-alanyl-gamma-D-glutamyl-meso-2,6-diaminopimeloyl-D-alanyl-D-alanine + di-trans,octa-cis-undecaprenyl phosphate = di-trans,octa-cis-undecaprenyl diphospho-N-acetyl-alpha-D-muramoyl-L-alanyl-D-glutamyl-meso-2,6-diaminopimeloyl-D-alanyl-D-alanine + UMP. It participates in cell wall biogenesis; peptidoglycan biosynthesis. In terms of biological role, catalyzes the initial step of the lipid cycle reactions in the biosynthesis of the cell wall peptidoglycan: transfers peptidoglycan precursor phospho-MurNAc-pentapeptide from UDP-MurNAc-pentapeptide onto the lipid carrier undecaprenyl phosphate, yielding undecaprenyl-pyrophosphoryl-MurNAc-pentapeptide, known as lipid I. In Alcanivorax borkumensis (strain ATCC 700651 / DSM 11573 / NCIMB 13689 / SK2), this protein is Phospho-N-acetylmuramoyl-pentapeptide-transferase.